A 367-amino-acid polypeptide reads, in one-letter code: Homoserine O-acetyltransferase (367 aa).

The AB hydrolase-1 domain occupies 41–339; the sequence is NLIVLEHALT…PVGHDAFLTE (299 aa). Residue Ser136 is the Nucleophile of the active site. Arg205 contacts substrate. Residues Asp303 and His333 contribute to the active site. Asp334 provides a ligand contact to substrate.

The protein belongs to the AB hydrolase superfamily. MetX family. As to quaternary structure, homodimer.

The protein localises to the cytoplasm. It carries out the reaction L-homoserine + acetyl-CoA = O-acetyl-L-homoserine + CoA. It participates in amino-acid biosynthesis; L-methionine biosynthesis via de novo pathway; O-acetyl-L-homoserine from L-homoserine: step 1/1. Functionally, transfers an acetyl group from acetyl-CoA to L-homoserine, forming acetyl-L-homoserine. The polypeptide is Homoserine O-acetyltransferase (Corynebacterium diphtheriae (strain ATCC 700971 / NCTC 13129 / Biotype gravis)).